A 136-amino-acid chain; its full sequence is MARTKQTARKATAWQAPRKPLATKAAGKRAPPTGGIKKPHRYKPGTLALREIRKYQKSTQLLLRKLPFQRLVREIAQAISPDLRFQSAAIGALQEASEAYLVQLFEDTNLCAIHARRVTIMPRDMQLARRLRREGP.

Over residues 1 to 16 (MARTKQTARKATAWQA) the composition is skewed to low complexity. The segment at 1 to 43 (MARTKQTARKATAWQAPRKPLATKAAGKRAPPTGGIKKPHRYK) is disordered. Arginine 3 is subject to Asymmetric dimethylarginine. At arginine 3 the chain carries Citrulline; alternate. The residue at position 4 (threonine 4) is a Phosphothreonine. Lysine 5 is modified (allysine; alternate). Lysine 5 carries the post-translational modification N6,N6,N6-trimethyllysine; alternate. An N6,N6-dimethyllysine; alternate modification is found at lysine 5. Lysine 5 is subject to N6-(2-hydroxyisobutyryl)lysine; alternate. An N6-(beta-hydroxybutyryl)lysine; alternate modification is found at lysine 5. N6-acetyllysine; alternate is present on lysine 5. An N6-crotonyllysine; alternate modification is found at lysine 5. Lysine 5 bears the N6-methyllysine; alternate mark. Glutamine 6 carries the 5-glutamyl dopamine; alternate modification. Position 6 is a 5-glutamyl serotonin; alternate (glutamine 6). Threonine 7 carries the phosphothreonine modification. Arginine 9 carries the post-translational modification Citrulline; alternate. Arginine 9 is modified (symmetric dimethylarginine). Residue lysine 10 is modified to N6,N6,N6-trimethyllysine; alternate. Residue lysine 10 is modified to N6,N6-dimethyllysine; alternate. At lysine 10 the chain carries N6-(2-hydroxyisobutyryl)lysine; alternate. Residue lysine 10 is modified to N6-(beta-hydroxybutyryl)lysine; alternate. Position 10 is an N6-acetyllysine; alternate (lysine 10). Lysine 10 is modified (N6-crotonyllysine; alternate). The residue at position 10 (lysine 10) is an N6-methyllysine; alternate. Position 10 is an N6-butyryllysine; alternate (lysine 10). An N6-lactoyllysine; alternate modification is found at lysine 10. Residue threonine 12 is modified to Phosphothreonine. Arginine 18 carries the asymmetric dimethylarginine modification. Position 18 is a citrulline; alternate (arginine 18). Lysine 19, lysine 24, lysine 28, and lysine 37 each carry N6-(2-hydroxyisobutyryl)lysine; alternate. Residues lysine 19, lysine 24, and lysine 28 each carry the N6-(beta-hydroxybutyryl)lysine; alternate modification. 4 positions are modified to N6-acetyllysine; alternate: lysine 19, lysine 24, lysine 28, and lysine 37. Lysine 19, lysine 24, and lysine 28 each carry N6-crotonyllysine; alternate. N6-methyllysine; alternate occurs at positions 19, 24, 28, and 37. Lysine 19 and lysine 24 each carry N6-butyryllysine; alternate. N6-lactoyllysine; alternate is present on residues lysine 19, lysine 24, and lysine 28. N6-glutaryllysine; alternate occurs at positions 19, 24, and 28. Residues lysine 28 and lysine 37 each carry the N6,N6,N6-trimethyllysine; alternate modification. An N6,N6-dimethyllysine; alternate mark is found at lysine 28 and lysine 37. N6-methyllysine is present on lysine 38. A Phosphotyrosine modification is found at tyrosine 42. The residue at position 57 (lysine 57) is an N6,N6,N6-trimethyllysine; alternate. Lysine 57 carries the N6-(2-hydroxyisobutyryl)lysine; alternate modification. N6-(beta-hydroxybutyryl)lysine; alternate is present on lysine 57. At lysine 57 the chain carries N6-acetyllysine; alternate. Position 57 is an N6-crotonyllysine; alternate (lysine 57). Lysine 57 carries the post-translational modification N6-lactoyllysine; alternate. Lysine 57 is modified (N6-glutaryllysine; alternate). The residue at position 57 (lysine 57) is an N6-methyllysine. Lysine 57 bears the N6-succinyllysine; alternate mark. Serine 58 bears the Phosphoserine mark. N6-(2-hydroxyisobutyryl)lysine; alternate is present on lysine 65. An N6-methyllysine; alternate modification is found at lysine 65. Serine 87 is modified (phosphoserine). At threonine 108 the chain carries Phosphothreonine.

The protein belongs to the histone H3 family. As to quaternary structure, the nucleosome is a histone octamer containing two molecules each of H2A, H2B, H3 and H4 assembled in one H3-H4 heterotetramer and two H2A-H2B heterodimers. The octamer wraps approximately 147 bp of DNA. Interacts with HIRA, a chaperone required for its incorporation into nucleosomes. Does not interact with DAXX chaperone. Acetylation is generally linked to gene activation. Acetylation on Lys-10 (H3K9ac) impairs methylation at Arg-9 (H3R8me2s). Acetylation on Lys-19 (H3K18ac) and Lys-24 (H3K24ac) favors methylation at Arg-18 (H3R17me). Post-translationally, citrullination at Arg-9 (H3R8ci) and/or Arg-18 (H3R17ci) impairs methylation and represses transcription. In terms of processing, asymmetric dimethylation at Arg-18 (H3R17me2a) is linked to gene activation. Symmetric dimethylation at Arg-9 (H3R8me2s) is linked to gene repression. Asymmetric dimethylation at Arg-3 (H3R2me2a) is linked to gene repression and is mutually exclusive with H3 Lys-5 methylation (H3K4me2 and H3K4me3). H3R2me2a is present at the 3' of genes regardless of their transcription state and is enriched on inactive promoters, while it is absent on active promoters. Methylation at Lys-5 (H3K4me) facilitates subsequent acetylation of H3 and H4. Methylation at Lys-10 (H3K9me) and Lys-28 (H3K27me), which are linked to gene repression, are underrepresented. Methylation at Lys-10 (H3K9me) is a specific target for HP1 proteins (CBX1, CBX3 and CBX5) and prevents subsequent acetylation of H3 and H4. Post-translationally, phosphorylation at Thr-7 (H3T6ph) is a specific tag for epigenetic transcriptional activation that prevents demethylation of Lys-5 (H3K4me) by LSD1/KDM1A. At centromeres, specifically phosphorylated at Thr-12 (H3T11ph) from prophase to early anaphase. Phosphorylation at Thr-12 (H3T11ph) is a specific tag for epigenetic transcriptional activation that promotes demethylation of Lys-10 (H3K9me). Phosphorylation at Tyr-42 (H3Y41ph) promotes exclusion of CBX5 (HP1 alpha) from chromatin. In terms of processing, lysine deamination at Lys-5 (H3K4all) to form allysine. Allysine formation only takes place on H3K4me3 and results in gene repression. Crotonylation (Kcr) is specifically present in male germ cells and marks testis-specific genes in post-meiotic cells, including X-linked genes that escape sex chromosome inactivation in haploid cells. Crotonylation marks active promoters and enhancers and confers resistance to transcriptional repressors. It is also associated with post-meiotically activated genes on autosomes. Post-translationally, butyrylation of histones marks active promoters and competes with histone acetylation. It is present during late spermatogenesis. In terms of tissue distribution, expressed at low level in some tissues, such as testis and brain.

The protein localises to the nucleus. It is found in the chromosome. Primate-specific variant histone H3, which constitutes a core component of nucleosomes. Histone H3.Y-containing nucleosomes accumulate around transcription start sites and have flexible DNA ends, suggesting that they form relaxed chromatin that allows transcription factor access. Histone H1 binds less efficiently to histone H3.Y-containing nucleosomes. Nucleosomes wrap and compact DNA into chromatin, limiting DNA accessibility to the cellular machineries which require DNA as a template. Histones thereby play a central role in transcription regulation, DNA repair, DNA replication and chromosomal stability. DNA accessibility is regulated via a complex set of post-translational modifications of histones, also called histone code, and nucleosome remodeling. This chain is Histone H3.Y, found in Homo sapiens (Human).